Here is a 298-residue protein sequence, read N- to C-terminus: Mitochondrial nicotinamide adenine dinucleotide transporter SLC25A51 (298 aa).

The span at 1–11 shows a compositional bias: basic and acidic residues; that stretch reads MMDSEAHEKRP. The disordered stretch occupies residues 1–21; it reads MMDSEAHEKRPPMLTSSNQDL. Solcar repeat units lie at residues 28–108, 117–201, and 214–297; these read VGDM…LSRL, PEFA…IKES, and NDFI…LLKI. Helical transmembrane passes span 36–56, 85–105, 119–139, 180–200, 216–236, and 269–290; these read CGYCAAFNNVAITYPVQKILF, LPPLMQKTTTLALMFGLYEDL, FATRSVAALLAGTTEAILTPF, ILFRNGFGNVLFFGLRGPIKE, FICGGVLGAVLGFLSFPINVV, and LFRGAHLNYHRSLISWGIINAT.

Belongs to the mitochondrial carrier (TC 2.A.29) family.

It localises to the mitochondrion inner membrane. It carries out the reaction NAD(+)(in) = NAD(+)(out). Functionally, mitochondrial membrane carrier protein that mediates the import of NAD(+) into mitochondria. Mitochondrial NAD(+) is required for glycolysis and mitochondrial respiration. Compared to SLC25A52, SLC25A51-mediated transport is essential for the import of NAD(+) in mitochondria. The transport mechanism, uniport or antiport, its electrogenicity and substrate selectivity, remain to be elucidated. This chain is Mitochondrial nicotinamide adenine dinucleotide transporter SLC25A51, found in Mus musculus (Mouse).